Consider the following 477-residue polypeptide: 3-isopropylmalate dehydratase large subunit (477 aa).

[4Fe-4S] cluster-binding residues include Cys-352, Cys-413, and Cys-416.

This sequence belongs to the aconitase/IPM isomerase family. LeuC type 1 subfamily. As to quaternary structure, heterodimer of LeuC and LeuD. The cofactor is [4Fe-4S] cluster.

The enzyme catalyses (2R,3S)-3-isopropylmalate = (2S)-2-isopropylmalate. It functions in the pathway amino-acid biosynthesis; L-leucine biosynthesis; L-leucine from 3-methyl-2-oxobutanoate: step 2/4. In terms of biological role, catalyzes the isomerization between 2-isopropylmalate and 3-isopropylmalate, via the formation of 2-isopropylmaleate. This chain is 3-isopropylmalate dehydratase large subunit, found in Pseudomonas putida (strain W619).